The sequence spans 1113 residues: Histone deacetylase 5 (1113 aa).

Positions 1–22 (MNSPNESDGMSGREPSLGILPR) are disordered. Residue Lys35 forms a Glycyl lysine isopeptide (Lys-Gly) (interchain with G-Cter in SUMO2) linkage. Disordered stretches follow at residues 39 to 63 (PGAM…RGAL) and 187 to 272 (KEPT…SSPL). A compositionally biased stretch (basic and acidic residues) spans 238–249 (DSRDDFPLRKTA). Ser250 bears the Phosphoserine; by AMPK, CaMK1, SIK1 and PKD/PRKD1 mark. Basic and acidic residues predominate over residues 263–272 (KVAERRSSPL). The residue at position 283 (Thr283) is a Phosphothreonine; by PKC. The segment at 472–494 (RTVGKLPRHRPLSRTQSSPLPQS) is disordered. Residues 484-494 (SRTQSSPLPQS) are compositionally biased toward low complexity. Ser488 carries the post-translational modification Phosphoserine; by AMPK, CaMK1, SIK1 and PKD/PRKD1. Lys523 is modified (N6-acetyllysine). A disordered region spans residues 526-611 (TKTGELSRQP…PDEGPDLEES (86 aa)). Acidic residues predominate over residues 571-610 (STQEDLEEEEEEEEEEEEDCIQVKDEDGESGPDEGPDLEE). Phosphoserine is present on residues Ser600 and Ser650. Residues 675–1019 (GVVYDTFMLK…VSALLSVELQ (345 aa)) are histone deacetylase. Zn(2+)-binding residues include Cys687, Cys689, His695, and Cys772. His824 is an active-site residue. Positions 1072–1113 (EEAETVSAMALLSVGAEQAQAVATQEHSPRPAEEPMEQEPAL) match the Nuclear export signal motif. Residues 1088–1113 (EQAQAVATQEHSPRPAEEPMEQEPAL) are disordered. The residue at position 1099 (Ser1099) is a Phosphoserine.

It belongs to the histone deacetylase family. HD type 2 subfamily. As to quaternary structure, interacts with AHRR, BAHD1, BCOR, HDAC7, HDAC9, CTBP1, MEF2C, NCOR2, NRIP1, PHB2 and a 14-3-3 chaperone protein. Interacts with BCL6, DDIT3/CHOP, GRK5, KDM5B and MYOCD. Interacts with EP300 in the presence of TFAP2C. Interacts with ANKRA2. Interacts with CUL7 (as part of the 3M complex); negatively regulated by ANKRA2. Interacts with ZBTB7B; the interaction allows the recruitment of HDAC4 on CD8 loci for deacetylation and possible inhibition of CD8 genes expression. Interacts with RARA. In terms of processing, phosphorylated by AMPK, CaMK1, SIK1 and PRKD1 at Ser-250 and Ser-488. The phosphorylation is required for the export to the cytoplasm and inhibition. Phosphorylated by the PKC kinases PKN1 and PKN2, impairing nuclear import. Phosphorylated by GRK5, leading to nuclear export of HDAC5 and allowing MEF2-mediated transcription. Ubiquitinated. Polyubiquitination however does not lead to its degradation.

The protein localises to the nucleus. It localises to the cytoplasm. The catalysed reaction is N(6)-acetyl-L-lysyl-[histone] + H2O = L-lysyl-[histone] + acetate. Its function is as follows. Responsible for the deacetylation of lysine residues on the N-terminal part of the core histones (H2A, H2B, H3 and H4). Histone deacetylation gives a tag for epigenetic repression and plays an important role in transcriptional regulation, cell cycle progression and developmental events. Histone deacetylases act via the formation of large multiprotein complexes. Involved in muscle maturation by repressing transcription of myocyte enhancer MEF2C. During muscle differentiation, it shuttles into the cytoplasm, allowing the expression of myocyte enhancer factors. Serves as a corepressor of RARA and causes its deacetylation. In association with RARA, plays a role in the repression of microRNA-10a and thereby in the inflammatory response. The sequence is that of Histone deacetylase 5 (Hdac5) from Mus musculus (Mouse).